We begin with the raw amino-acid sequence, 94 residues long: DNA-directed RNA polymerase subunit omega (94 aa).

This sequence belongs to the RNA polymerase subunit omega family. In terms of assembly, the RNAP catalytic core consists of 2 alpha, 1 beta, 1 beta' and 1 omega subunit. When a sigma factor is associated with the core the holoenzyme is formed, which can initiate transcription.

It carries out the reaction RNA(n) + a ribonucleoside 5'-triphosphate = RNA(n+1) + diphosphate. Promotes RNA polymerase assembly. Latches the N- and C-terminal regions of the beta' subunit thereby facilitating its interaction with the beta and alpha subunits. The protein is DNA-directed RNA polymerase subunit omega of Bifidobacterium animalis subsp. lactis (strain AD011).